The following is a 340-amino-acid chain: N-acetyl-gamma-glutamyl-phosphate reductase (340 aa).

The active site involves Cys-149.

The protein belongs to the NAGSA dehydrogenase family. Type 1 subfamily.

Its subcellular location is the cytoplasm. The enzyme catalyses N-acetyl-L-glutamate 5-semialdehyde + phosphate + NADP(+) = N-acetyl-L-glutamyl 5-phosphate + NADPH + H(+). Its pathway is amino-acid biosynthesis; L-arginine biosynthesis; N(2)-acetyl-L-ornithine from L-glutamate: step 3/4. In terms of biological role, catalyzes the NADPH-dependent reduction of N-acetyl-5-glutamyl phosphate to yield N-acetyl-L-glutamate 5-semialdehyde. The polypeptide is N-acetyl-gamma-glutamyl-phosphate reductase (Ruthia magnifica subsp. Calyptogena magnifica).